Consider the following 452-residue polypeptide: MGRDIPDNETWWYNPYMDIHPHWKQFDQVPAAVYYSLGIFIAICGIIGCVGNGVVIYLFTKTKSLQTPANMFIINLAFSDFTFSLVNGFPLMTISCFMKYWVFGNAACKVYGLIGGIFGLMSIMTMTMISIDRYNVIGRPMSASKKMSHRKAFIMIIFVWIWSTIWAIGPIFGWGAYTLEGVLCNCSFDYITRDTTTRSNILCMYIFAFMCPIVVIFFCYFNIVMSVSNHEKEMAAMAKRLNAKELRKAQAGANAEMKLAKISIVIVTQFLLSWSPYAVVALLAQFGPIEWVTPYAAQLPVMFAKASAIHNPMIYSVSHPKFRERIASNFPWILTCCQYDEKEIEDDKDAEAEIPAGEQSGGETADAAQMKEMMAMMQKMQAQQQQQPAYPPQGYPPQGYPPPPPQGYPPQGYPPQGYPPQGYPPPPQGPPPQGPPPQAAPPQGVDNQAYQA.

Residues 1–33 (MGRDIPDNETWWYNPYMDIHPHWKQFDQVPAAV) lie on the Extracellular side of the membrane. N-linked (GlcNAc...) asparagine glycosylation is present at asparagine 8. The chain crosses the membrane as a helical span at residues 34–58 (YYSLGIFIAICGIIGCVGNGVVIYL). Residues 59 to 70 (FTKTKSLQTPAN) are Cytoplasmic-facing. The chain crosses the membrane as a helical span at residues 71 to 97 (MFIINLAFSDFTFSLVNGFPLMTISCF). The Extracellular segment spans residues 98 to 109 (MKYWVFGNAACK). Cysteine 108 and cysteine 186 are joined by a disulfide. A helical membrane pass occupies residues 110–131 (VYGLIGGIFGLMSIMTMTMISI). Positions 132 to 134 (DRY) match the 'Ionic lock' involved in activated form stabilization motif. Over 132 to 151 (DRYNVIGRPMSASKKMSHRK) the chain is Cytoplasmic. Residues 152–172 (AFIMIIFVWIWSTIWAIGPIF) traverse the membrane as a helical segment. The Extracellular portion of the chain corresponds to 173-199 (GWGAYTLEGVLCNCSFDYITRDTTTRS). The chain crosses the membrane as a helical span at residues 200 to 224 (NILCMYIFAFMCPIVVIFFCYFNIV). Over 225 to 261 (MSVSNHEKEMAAMAKRLNAKELRKAQAGANAEMKLAK) the chain is Cytoplasmic. The chain crosses the membrane as a helical span at residues 262–283 (ISIVIVTQFLLSWSPYAVVALL). The Extracellular portion of the chain corresponds to 284–293 (AQFGPIEWVT). A helical transmembrane segment spans residues 294 to 315 (PYAAQLPVMFAKASAIHNPMIY). Lysine 305 carries the post-translational modification N6-(retinylidene)lysine. Topologically, residues 316–452 (SVSHPKFRER…QGVDNQAYQA (137 aa)) are cytoplasmic. 2 S-palmitoyl cysteine lipidation sites follow: cysteine 336 and cysteine 337. 2 disordered regions span residues 346-365 (DDKDAEAEIPAGEQSGGETA) and 376-452 (MMQK…AYQA). The segment covering 376–388 (MMQKMQAQQQQQP) has biased composition (low complexity). The span at 389–440 (AYPPQGYPPQGYPPPPPQGYPPQGYPPQGYPPQGYPPPPQGPPPQGPPPQAA) shows a compositional bias: pro residues.

The protein belongs to the G-protein coupled receptor 1 family. Opsin subfamily. Contains one covalently linked retinal chromophore. Upon light absorption, the covalently bound 11-cis-retinal is converted to all-trans-retinal. After hydrolysis of the Schiff base and release of the covalently bound all-trans-retinal, active rhodopsin is regenerated by binding of a fresh molecule of 11-cis-retinal.

It is found in the cell projection. Its subcellular location is the rhabdomere membrane. Photoreceptor required for image-forming vision at low light intensity. Light-induced isomerization of 11-cis to all-trans retinal triggers a conformational change that activates signaling via G-proteins. Signaling mediates the activation of phospholipase C. Subsequent receptor phosphorylation mediates displacement of the bound G-protein alpha subunit by arrestin and terminates signaling. This Loligo forbesii (Veined squid) protein is Rhodopsin (RHO).